The chain runs to 91 residues: MVMMKLFTSPTCPYCPKAEKVVSKVAKEEGVLAINLPVNTDEGLKEALKFGIRGVPALVINDKYLILGVPDEGELRQLIRKLKGGEEYGAS.

Positions 1–91 constitute a Glutaredoxin domain; sequence MVMMKLFTSP…LKGGEEYGAS (91 aa). An intrachain disulfide couples cysteine 12 to cysteine 15.

This sequence belongs to the glutaredoxin family.

The protein resides in the cytoplasm. Acts to maintain redox homeostasis; functions as a protein disulfide reductase. The chain is Probable Thioredoxin from Archaeoglobus fulgidus (strain ATCC 49558 / DSM 4304 / JCM 9628 / NBRC 100126 / VC-16).